We begin with the raw amino-acid sequence, 298 residues long: L-xylulose reductase (298 aa).

NADP(+)-binding residues include I19, D68, and N103. Catalysis depends on proton donor residues S161, S162, and Y175. NADP(+) is bound by residues Y175, K179, and V207. Residue K179 is the Lowers pKa of active site Tyr of the active site.

It belongs to the short-chain dehydrogenases/reductases (SDR) family.

The enzyme catalyses xylitol + NADP(+) = L-xylulose + NADPH + H(+). Its pathway is carbohydrate degradation; L-arabinose degradation via L-arabinitol; D-xylulose 5-phosphate from L-arabinose (fungal route): step 3/5. In terms of biological role, L-xylulose reductase involved in the catabolism of L-arabinose through an oxidoreductive pathway. Catalyzes the NADPH-dependent reduction of L-xylulose. The protein is L-xylulose reductase of Aspergillus niger (strain ATCC 1015 / CBS 113.46 / FGSC A1144 / LSHB Ac4 / NCTC 3858a / NRRL 328 / USDA 3528.7).